We begin with the raw amino-acid sequence, 351 residues long: Photosystem II D2 protein (351 aa).

The helical transmembrane segment at 39 to 59 (TAYLAIGGWLTGTTFVTSWYT) threads the bilayer. Chlorophyll a is bound at residue histidine 116. A helical transmembrane segment spans residues 123–139 (GFMLRQFEISRLVGIRP). Pheophytin a-binding residues include glutamine 128 and asparagine 141. Residues 151 to 164 (VFVSVFLIYPLGQS) form a helical membrane-spanning segment. Histidine 196 serves as a coordination point for chlorophyll a. Residues 206–226 (GALLSAIHGVTVENTLYEDGE) traverse the membrane as a helical segment. Histidine 213 and phenylalanine 260 together coordinate a plastoquinone. Histidine 213 contributes to the Fe cation binding site. Histidine 267 is a binding site for Fe cation. Residues 277–293 (GLWTSSIGIIGLALNLR) form a helical membrane-spanning segment.

Belongs to the reaction center PufL/M/PsbA/D family. In terms of assembly, PSII is composed of 1 copy each of membrane proteins PsbA, PsbB, PsbC, PsbD, PsbE, PsbF, PsbH, PsbI, PsbJ, PsbK, PsbL, PsbM, PsbT, PsbX, PsbY, PsbZ, Psb30/Ycf12, peripheral proteins PsbO, CyanoQ (PsbQ), PsbU, PsbV and a large number of cofactors. It forms dimeric complexes. Requires The D1/D2 heterodimer binds P680, chlorophylls that are the primary electron donor of PSII, and subsequent electron acceptors. It shares a non-heme iron and each subunit binds pheophytin, quinone, additional chlorophylls, carotenoids and lipids. There is also a Cl(-1) ion associated with D1 and D2, which is required for oxygen evolution. The PSII complex binds additional chlorophylls, carotenoids and specific lipids. as cofactor.

It localises to the host cellular thylakoid membrane. The enzyme catalyses 2 a plastoquinone + 4 hnu + 2 H2O = 2 a plastoquinol + O2. In terms of biological role, photosystem II (PSII) is a light-driven water:plastoquinone oxidoreductase that uses light energy to abstract electrons from H(2)O, generating O(2) and a proton gradient subsequently used for ATP formation. It consists of a core antenna complex that captures photons, and an electron transfer chain that converts photonic excitation into a charge separation. The D1/D2 (PsbA/PsbD) reaction center heterodimer binds P680, the primary electron donor of PSII as well as several subsequent electron acceptors. D2 is needed for assembly of a stable PSII complex. This is Photosystem II D2 protein (psbD) from Synechococcus.